Here is a 339-residue protein sequence, read N- to C-terminus: Phenylalanine--tRNA ligase alpha subunit (339 aa).

Mg(2+) is bound at residue Glu-254.

It belongs to the class-II aminoacyl-tRNA synthetase family. Phe-tRNA synthetase alpha subunit type 1 subfamily. Tetramer of two alpha and two beta subunits. Requires Mg(2+) as cofactor.

The protein localises to the cytoplasm. It catalyses the reaction tRNA(Phe) + L-phenylalanine + ATP = L-phenylalanyl-tRNA(Phe) + AMP + diphosphate + H(+). The protein is Phenylalanine--tRNA ligase alpha subunit of Clostridium botulinum (strain Alaska E43 / Type E3).